An 839-amino-acid polypeptide reads, in one-letter code: Heat shock 70 kDa protein 4L (839 aa).

2 positions are modified to phosphoserine: S74 and S508. Residues 503 to 554 (LEGDHSDAPMETETSFKNENKDNMDKMQVDQEEGHQKCHAEHTPEEEIDHTG) show a composition bias toward basic and acidic residues. Positions 503–567 (LEGDHSDAPM…KSAVSDKQDR (65 aa)) are disordered. At T545 the chain carries Phosphothreonine. At S579 the chain carries Phosphoserine. A Phosphothreonine modification is found at T761. Residues 786 to 839 (IYKPKPKAEVPEDKPKANSEHNGPMDGQSGTETKSDSTKDSSQHTKSSGEMEVD) form a disordered region. Composition is skewed to basic and acidic residues over residues 791 to 804 (PKAE…KANS) and 818 to 839 (TKSD…MEVD).

It belongs to the heat shock protein 70 family. Homodimer.

It is found in the cytoplasm. Its subcellular location is the nucleus. In terms of biological role, possesses chaperone activity in vitro where it inhibits aggregation of citrate synthase. This chain is Heat shock 70 kDa protein 4L (HSPA4L), found in Homo sapiens (Human).